The primary structure comprises 156 residues: E3 ubiquitin-protein ligase RNF181 (156 aa).

Residues 79–120 (CPVCLLEFEEGETVRQLPCEHLFHSACILPWLGKTNSCPLCR) form an RING-type; atypical zinc finger.

The protein belongs to the RNF181 family.

The enzyme catalyses S-ubiquitinyl-[E2 ubiquitin-conjugating enzyme]-L-cysteine + [acceptor protein]-L-lysine = [E2 ubiquitin-conjugating enzyme]-L-cysteine + N(6)-ubiquitinyl-[acceptor protein]-L-lysine.. It participates in protein modification; protein ubiquitination. E3 ubiquitin-protein ligase which accepts ubiquitin from an E2 ubiquitin-conjugating enzyme in the form of a thioester and then directly transfers the ubiquitin to targeted substrates. Catalyzes monoubiquitination of 26S proteasome subunit PSMC2/RPT1. In Xenopus laevis (African clawed frog), this protein is E3 ubiquitin-protein ligase RNF181 (rnf181).